The sequence spans 154 residues: 6,7-dimethyl-8-ribityllumazine synthase (154 aa).

Residues F22, 57 to 59 (AYE), and 81 to 83 (AVI) contribute to the 5-amino-6-(D-ribitylamino)uracil site. 86–87 (GT) serves as a coordination point for (2S)-2-hydroxy-3-oxobutyl phosphate. The active-site Proton donor is the H89. F114 provides a ligand contact to 5-amino-6-(D-ribitylamino)uracil. (2S)-2-hydroxy-3-oxobutyl phosphate is bound at residue R128.

It belongs to the DMRL synthase family. As to quaternary structure, forms an icosahedral capsid composed of 60 subunits, arranged as a dodecamer of pentamers.

The enzyme catalyses (2S)-2-hydroxy-3-oxobutyl phosphate + 5-amino-6-(D-ribitylamino)uracil = 6,7-dimethyl-8-(1-D-ribityl)lumazine + phosphate + 2 H2O + H(+). It participates in cofactor biosynthesis; riboflavin biosynthesis; riboflavin from 2-hydroxy-3-oxobutyl phosphate and 5-amino-6-(D-ribitylamino)uracil: step 1/2. Catalyzes the formation of 6,7-dimethyl-8-ribityllumazine by condensation of 5-amino-6-(D-ribitylamino)uracil with 3,4-dihydroxy-2-butanone 4-phosphate. This is the penultimate step in the biosynthesis of riboflavin. The chain is 6,7-dimethyl-8-ribityllumazine synthase from Colwellia psychrerythraea (strain 34H / ATCC BAA-681) (Vibrio psychroerythus).